A 1121-amino-acid polypeptide reads, in one-letter code: Potassium channel subfamily U member 1 (1121 aa).

At methionine 1–glutamine 24 the chain is on the extracellular side. The chain crosses the membrane as a helical span at residues alanine 25–phenylalanine 45. The Cytoplasmic segment spans residues arginine 46–valine 101. Residues glycine 102–isoleucine 122 traverse the membrane as a helical segment. Residues asparagine 123–lysine 137 lie on the Extracellular side of the membrane. A helical membrane pass occupies residues isoleucine 138 to tryptophan 158. The Cytoplasmic segment spans residues alanine 159–lysine 165. The chain crosses the membrane as a helical span at residues phenylalanine 166–tyrosine 186. The Extracellular segment spans residues tyrosine 187 to leucine 188. A helical; Voltage-sensor membrane pass occupies residues lysine 189–isoleucine 209. The Cytoplasmic segment spans residues leucine 210–lysine 226. Residues leucine 227–asparagine 247 traverse the membrane as a helical segment. Topologically, residues serine 248 to glutamine 259 are extracellular. The segment at residues threonine 260–valine 282 is an intramembrane region (pore-forming). The Selectivity for potassium motif lies at threonine 276–phenylalanine 279. Topologically, residues valine 283–arginine 290 are extracellular. Residues isoleucine 291 to methionine 311 traverse the membrane as a helical segment. Residues valine 312–lysine 1121 lie on the Cytoplasmic side of the membrane. RCK N-terminal domains lie at lysine 331 to leucine 473 and glutamine 718 to leucine 889. Disordered stretches follow at residues serine 836–lysine 858 and aspartate 1052–phenylalanine 1076.

It belongs to the potassium channel family. Calcium-activated (TC 1.A.1.3) subfamily. KCa5.1/KCNU1 sub-subfamily. As to quaternary structure, homotetramer; which constitutes the calcium-activated potassium channel. Interact with LRRC52; this interaction changes some channel gating properties, such as shifting gating to more negative potentials at a given pH. As to expression, testis-specific. Mainly expressed in spermatocytes. In terms of tissue distribution, expressed in testis, brain, eye and kidney.

It localises to the cell membrane. The protein localises to the cytoplasm. The catalysed reaction is K(+)(in) = K(+)(out). Regulated by changes in cytosolic pH; activated by alkalization. In contrast to human KCNU1 is not activated by Ca(2+) or Mg(2+). The auxiliary subunit LRRC52 shifts the activation of KCNU1 to more negative potentials at a given pH. In terms of biological role, testis-specific potassium channel activated by both intracellular pH and membrane voltage that mediates export of K(+). Represents the primary spermatozoan K(+) current. The channel underlies a pH-triggered membrane hyperpolarization during the process of sperm capacitation, as sperm encounter the alkaline environment near the ovum in the female reproductive tract, thereby playing an essential for male fertility. The chain is Potassium channel subfamily U member 1 (Kcnu1) from Mus musculus (Mouse).